Reading from the N-terminus, the 403-residue chain is Creatinase (403 aa).

The active site involves His232.

It belongs to the peptidase M24 family. Creatinase subfamily. Homodimer.

It catalyses the reaction creatine + H2O = sarcosine + urea. The chain is Creatinase from Flavobacterium sp. (strain U-188).